The primary structure comprises 332 residues: Ribosomal RNA small subunit methyltransferase H (332 aa).

S-adenosyl-L-methionine contacts are provided by residues 36–38, aspartate 54, phenylalanine 81, aspartate 102, and glutamine 109; that span reads GGY. Positions 284–332 are disordered; sequence VTAGQEEVSANPRARSAKLRAAERTAAPATADDGESPGWPSLANVMRGG.

It belongs to the methyltransferase superfamily. RsmH family.

It is found in the cytoplasm. The catalysed reaction is cytidine(1402) in 16S rRNA + S-adenosyl-L-methionine = N(4)-methylcytidine(1402) in 16S rRNA + S-adenosyl-L-homocysteine + H(+). In terms of biological role, specifically methylates the N4 position of cytidine in position 1402 (C1402) of 16S rRNA. The polypeptide is Ribosomal RNA small subunit methyltransferase H (Nitrobacter hamburgensis (strain DSM 10229 / NCIMB 13809 / X14)).